The sequence spans 467 residues: MSNSQLKIKTKALPNSRIAIEFEVPAQQCKTSFEDALTTLCKSANLPGFRKGKVPKSVILQQIGSKRIQASALEKLLEKIWKQALKEESIEPLCEPELAGGFEPLLENFNPEQTLSVTLETDVAPIPKLKTTKGLTTEAEPITFDESKVDELIEESRKQLATVIPVENRPANHSDIAILTFKGTFADDGSEIEGGSGESMEIDLEEGRMIPGFIEGIVGMKINETKTIDCQFPKDYQDEKAKGRKAKFDIQLQDLKTRELPKLDDDFAKQASDKNSLKELRNELTNRLKSDAKNRNKKNRQESLLEALVKELEVDLPKTLIDEEVRNLIEQTARNFAEQGMDIKSTFTQDLVSSLMESSRPEAEINLKKNLALNALAEAENIKVDSQALEEKIKEVNIELANQKNIDQKKLRQVVQNDLLQEKLFDWLEANNTILEKKPKKALNEKVKSSKPKNTQKKTDKTKKDSP.

One can recognise a PPIase FKBP-type domain in the interval 174–261; the sequence is SDIAILTFKG…LQDLKTRELP (88 aa). The interval 439–467 is disordered; it reads PKKALNEKVKSSKPKNTQKKTDKTKKDSP. Basic and acidic residues predominate over residues 457–467; that stretch reads KKTDKTKKDSP.

This sequence belongs to the FKBP-type PPIase family. Tig subfamily.

The protein localises to the cytoplasm. It carries out the reaction [protein]-peptidylproline (omega=180) = [protein]-peptidylproline (omega=0). Functionally, involved in protein export. Acts as a chaperone by maintaining the newly synthesized protein in an open conformation. Functions as a peptidyl-prolyl cis-trans isomerase. In Prochlorococcus marinus (strain SARG / CCMP1375 / SS120), this protein is Trigger factor.